Reading from the N-terminus, the 552-residue chain is Phosphoribosylaminoimidazole carboxylase (552 aa).

An ATP-grasp domain is found at 108–295 (KQHLQVFKIA…QFEAHLRAIC (188 aa)). 134-189 (GQEFGYPFVLKSKTLAYDGRGNYVVHQPSEIPTAIKALGDRPLYVEKFVPFSMEIA) serves as a coordination point for ATP.

The protein in the C-terminal section; belongs to the AIR carboxylase family. Class I subfamily.

It carries out the reaction 5-amino-1-(5-phospho-D-ribosyl)imidazole-4-carboxylate + H(+) = 5-amino-1-(5-phospho-beta-D-ribosyl)imidazole + CO2. It participates in purine metabolism; IMP biosynthesis via de novo pathway; 5-amino-1-(5-phospho-D-ribosyl)imidazole-4-carboxylate from 5-amino-1-(5-phospho-D-ribosyl)imidazole (carboxylase route): step 1/1. This is Phosphoribosylaminoimidazole carboxylase (ade6) from Schizosaccharomyces pombe (strain 972 / ATCC 24843) (Fission yeast).